A 1318-amino-acid polypeptide reads, in one-letter code: DNA-directed RNA polymerase subunit beta' (1318 aa).

The Zn(2+) site is built by Cys221, Cys295, Cys302, and Cys305.

This sequence belongs to the RNA polymerase beta' chain family. RpoC2 subfamily. As to quaternary structure, in cyanobacteria the RNAP catalytic core is composed of 2 alpha, 1 beta, 1 beta', 1 gamma and 1 omega subunit. When a sigma factor is associated with the core the holoenzyme is formed, which can initiate transcription. Requires Zn(2+) as cofactor.

It carries out the reaction RNA(n) + a ribonucleoside 5'-triphosphate = RNA(n+1) + diphosphate. Its function is as follows. DNA-dependent RNA polymerase catalyzes the transcription of DNA into RNA using the four ribonucleoside triphosphates as substrates. In Synechococcus sp. (strain ATCC 27144 / PCC 6301 / SAUG 1402/1) (Anacystis nidulans), this protein is DNA-directed RNA polymerase subunit beta'.